The chain runs to 300 residues: Fatty acid elongase 3 (300 aa).

The next 3 membrane-spanning stretches (helical) occupy residues 31–51, 61–81, and 127–147; these read VPAV…ENVM, FLNM…AYYC, and IFFD…KIPE. The short motif at 165-169 is the HxxHH motif element; the sequence is HWYHH. The Nucleophile role is filled by histidine 168. The next 4 membrane-spanning stretches (helical) occupy residues 170-190, 192-212, 219-239, and 261-283; these read ATVM…GLWF, TMNY…ACGM, IAPL…LIVL, and MGLL…SYIS.

The protein belongs to the ELO family.

The protein localises to the endoplasmic reticulum membrane. The catalysed reaction is an acyl-CoA + malonyl-CoA + H(+) = a 3-oxoacyl-CoA + CO2 + CoA. The protein operates within lipid metabolism; fatty acid biosynthesis. In terms of biological role, involved in the synthesis of fatty acids. Elongates C14 fatty acids to C18. Required for the maintenance of the global lipidome profile in this parasite. The chain is Fatty acid elongase 3 from Trypanosoma cruzi (strain CL Brener).